An 84-amino-acid chain; its full sequence is uncharacterized protein (84 aa).

This is an uncharacterized protein from Orgyia pseudotsugata (Douglas-fir tussock moth).